Consider the following 136-residue polypeptide: ATP synthase epsilon chain (136 aa).

The protein belongs to the ATPase epsilon chain family. In terms of assembly, F-type ATPases have 2 components, CF(1) - the catalytic core - and CF(0) - the membrane proton channel. CF(1) has five subunits: alpha(3), beta(3), gamma(1), delta(1), epsilon(1). CF(0) has three main subunits: a, b and c.

It is found in the cell inner membrane. Functionally, produces ATP from ADP in the presence of a proton gradient across the membrane. The protein is ATP synthase epsilon chain of Hydrogenobaculum sp. (strain Y04AAS1).